Reading from the N-terminus, the 70-residue chain is ATP synthase subunit c (70 aa).

Transmembrane regions (helical) follow at residues 4 to 24 (IAAA…NGLI) and 49 to 69 (GIAL…LAFF).

Belongs to the ATPase C chain family. F-type ATPases have 2 components, F(1) - the catalytic core - and F(0) - the membrane proton channel. F(1) has five subunits: alpha(3), beta(3), gamma(1), delta(1), epsilon(1). F(0) has three main subunits: a(1), b(2) and c(10-14). The alpha and beta chains form an alternating ring which encloses part of the gamma chain. F(1) is attached to F(0) by a central stalk formed by the gamma and epsilon chains, while a peripheral stalk is formed by the delta and b chains. The F(1)F(0) complex interacts with SpoIIIJ and YqjG; YqgA is found in the same complex.

It localises to the cell membrane. F(1)F(0) ATP synthase produces ATP from ADP in the presence of a proton or sodium gradient. F-type ATPases consist of two structural domains, F(1) containing the extramembraneous catalytic core and F(0) containing the membrane proton channel, linked together by a central stalk and a peripheral stalk. During catalysis, ATP synthesis in the catalytic domain of F(1) is coupled via a rotary mechanism of the central stalk subunits to proton translocation. In terms of biological role, key component of the F(0) channel; it plays a direct role in translocation across the membrane. A homomeric c-ring of between 10-14 subunits forms the central stalk rotor element with the F(1) delta and epsilon subunits. This chain is ATP synthase subunit c, found in Bacillus subtilis (strain 168).